The sequence spans 174 residues: Crossover junction endodeoxyribonuclease RuvC (174 aa).

Catalysis depends on residues aspartate 8, glutamate 67, and aspartate 139. Mg(2+) is bound by residues aspartate 8, glutamate 67, and aspartate 139.

It belongs to the RuvC family. In terms of assembly, homodimer which binds Holliday junction (HJ) DNA. The HJ becomes 2-fold symmetrical on binding to RuvC with unstacked arms; it has a different conformation from HJ DNA in complex with RuvA. In the full resolvosome a probable DNA-RuvA(4)-RuvB(12)-RuvC(2) complex forms which resolves the HJ. Mg(2+) is required as a cofactor.

Its subcellular location is the cytoplasm. The catalysed reaction is Endonucleolytic cleavage at a junction such as a reciprocal single-stranded crossover between two homologous DNA duplexes (Holliday junction).. The RuvA-RuvB-RuvC complex processes Holliday junction (HJ) DNA during genetic recombination and DNA repair. Endonuclease that resolves HJ intermediates. Cleaves cruciform DNA by making single-stranded nicks across the HJ at symmetrical positions within the homologous arms, yielding a 5'-phosphate and a 3'-hydroxyl group; requires a central core of homology in the junction. The consensus cleavage sequence is 5'-(A/T)TT(C/G)-3'. Cleavage occurs on the 3'-side of the TT dinucleotide at the point of strand exchange. HJ branch migration catalyzed by RuvA-RuvB allows RuvC to scan DNA until it finds its consensus sequence, where it cleaves and resolves the cruciform DNA. This Pseudomonas putida (strain GB-1) protein is Crossover junction endodeoxyribonuclease RuvC.